The primary structure comprises 467 residues: Keratin, type 1 cytoskeletal 11 (467 aa).

The interval 1-100 (MSYSSFSIAQ…GGTDFLLGTS (100 aa)) is head. The span at 12 to 30 (SRVPSLSGTRSSSSYSLKS) shows a compositional bias: low complexity. The disordered stretch occupies residues 12–32 (SRVPSLSGTRSSSSYSLKSDL). The interval 101 to 137 (GKEAMQNLNDRLADYLARVRSLEDRNRELEQKIREWY) is coil 1A. The IF rod domain occupies 101–413 (GKEAMQNLND…TLLEGDAGRS (313 aa)). The linker 1 stretch occupies residues 138–156 (EKQGAGTKRKDFSHYFKII). Residues 157–248 (ADLQNQINAG…SHDEDMKALR (92 aa)) are coil 1B. Residues 249–268 (SQLGGQVNVEVDAAPAEDLT) are linker 12. Positions 269 to 416 (KKLEIIRQRY…EGDAGRSHSS (148 aa)) are coil 2. The tract at residues 409 to 430 (DAGRSHSSSHLSSTVSKDKVPV) is disordered. The interval 417–463 (SHLSSTVSKDKVPVSSPNVITKVRTIVEEKINGQVISKKEYEGSPDQ) is tail.

The protein belongs to the intermediate filament family. Heterotetramer of two type I and two type II keratins. In terms of tissue distribution, expressed in the outermost cell layers of skin epidermis (at protein level).

This chain is Keratin, type 1 cytoskeletal 11, found in Protopterus aethiopicus (Marbled lungfish).